We begin with the raw amino-acid sequence, 73 residues long: Omega-conotoxin CVID (73 aa).

A signal peptide spans 1–22 (MKLTCVVIVAVLLLTACQLITA). A propeptide spanning residues 23–45 (DDSRGTQKHRALRSDTKLSMSTR) is cleaved from the precursor. Intrachain disulfides connect Cys46/Cys61, Cys53/Cys65, and Cys60/Cys72. Cys72 carries the post-translational modification Cysteine amide.

Belongs to the conotoxin O1 superfamily. In terms of tissue distribution, expressed by the venom duct.

The protein resides in the secreted. Its function is as follows. Omega-conotoxins act at presynaptic membranes, they bind and block voltage-gated calcium channels. This toxin inhibits neurotransmitter release, it blocks N-type calcium channels, probably a N-type (Cav2.2/CACNA1B) calcium channel variant. The polypeptide is Omega-conotoxin CVID (Conus catus (Cat cone)).